The chain runs to 935 residues: Protein translocase subunit SecA (935 aa).

ATP is bound by residues Gln90, 108 to 112, and Asp504; that span reads GEGKT.

Belongs to the SecA family. Monomer and homodimer. Part of the essential Sec protein translocation apparatus which comprises SecA, SecYEG and auxiliary proteins SecDF. Other proteins may also be involved.

Its subcellular location is the cell inner membrane. The protein localises to the cellular thylakoid membrane. It is found in the cytoplasm. It catalyses the reaction ATP + H2O + cellular proteinSide 1 = ADP + phosphate + cellular proteinSide 2.. Part of the Sec protein translocase complex. Interacts with the SecYEG preprotein conducting channel. Has a central role in coupling the hydrolysis of ATP to the transfer of proteins into and across the cell membrane, serving as an ATP-driven molecular motor driving the stepwise translocation of polypeptide chains across the membrane. Its function is as follows. Probably participates in protein translocation into and across both the cytoplasmic and thylakoid membranes in cyanobacterial cells. The chain is Protein translocase subunit SecA from Gloeothece citriformis (strain PCC 7424) (Cyanothece sp. (strain PCC 7424)).